The following is a 116-amino-acid chain: Putative pterin-4-alpha-carbinolamine dehydratase (116 aa).

Belongs to the pterin-4-alpha-carbinolamine dehydratase family.

The catalysed reaction is (4aS,6R)-4a-hydroxy-L-erythro-5,6,7,8-tetrahydrobiopterin = (6R)-L-erythro-6,7-dihydrobiopterin + H2O. This Xylella fastidiosa (strain M23) protein is Putative pterin-4-alpha-carbinolamine dehydratase.